Reading from the N-terminus, the 308-residue chain is Acyltransferase drtE (308 aa).

The AB hydrolase-1 domain maps to 35 to 159 (PALVMNPGYN…AAEAKDNFSR (125 aa)).

Belongs to the polyketide transferase af380 family.

It participates in secondary metabolite biosynthesis; terpenoid biosynthesis. Its function is as follows. Acyltransferase; part of the gene cluster that mediates the biosynthesis of various drimane-type sesquiterpene esters, compounds that exhibit diverse biological activities and are widely present in eukaryotes. The pathway begins with the synthesis of the backbone drimenol by the terpene cyclase drtB using farnesyl pyrophosphate (FPP) as substrate. The cytochrome P450 monooxygenase drtD is then responsible for the hydroxylations at C-6, C-9 and C-12, as well as the oxidation of hydroxyl groups at C-6 and C-11 to a ketone and an aldehyde, respectively. Then, the biosynthesis can go in two directions, either the hydroxylated drimenol is further hydroxylated at C-2 and C-3 by an enzyme(s) not associated with the drt cluster, or the FAD-binding oxidoreductase drtC further oxidizes C-11 or C-12 to form the butyrolactone ring. DrtB, drtD and drtC are solely responsible for the formation of the different drimane structures observed during drimane sesquiterpenes biosynthesis. The polyketide synthase drtA synthesizes different lengths (C6 and C8) of PKS chains, which are then oxidized to varying degrees by the short-chain dehydrogenase drtF. Finally, these PKS chains are transferred onto drimane sesquiterpenes by the acyltransferase drtE, forming the sesquiterpene esters. In addition to the different fatty acyl-CoA chains produced by drtA, drtE is also able to use cinnamoyl-CoA as a substrate. In Aspergillus calidoustus, this protein is Acyltransferase drtE.